The sequence spans 206 residues: Peptidyl-tRNA hydrolase (206 aa).

Y14 serves as a coordination point for tRNA. The active-site Proton acceptor is H19. F64 and N66 together coordinate tRNA. Residues 185 to 206 (VNGEAPKKSKDQAKEPANEQPR) form a disordered region. A compositionally biased stretch (basic and acidic residues) spans 189-206 (APKKSKDQAKEPANEQPR).

Belongs to the PTH family. In terms of assembly, monomer.

The protein resides in the cytoplasm. It catalyses the reaction an N-acyl-L-alpha-aminoacyl-tRNA + H2O = an N-acyl-L-amino acid + a tRNA + H(+). Functionally, hydrolyzes ribosome-free peptidyl-tRNAs (with 1 or more amino acids incorporated), which drop off the ribosome during protein synthesis, or as a result of ribosome stalling. Its function is as follows. Catalyzes the release of premature peptidyl moieties from peptidyl-tRNA molecules trapped in stalled 50S ribosomal subunits, and thus maintains levels of free tRNAs and 50S ribosomes. The polypeptide is Peptidyl-tRNA hydrolase (Herpetosiphon aurantiacus (strain ATCC 23779 / DSM 785 / 114-95)).